Consider the following 249-residue polypeptide: Spindlin-4 (249 aa).

3 tudor-like domain regions span residues valine 41–histidine 90, valine 119–leucine 168, and valine 201–valine 246. Histone H3K4me3 and H3R8me2a binding regions lie at residues glycine 80–tyrosine 85, glutamate 128, and aspartate 237–histidine 239.

It belongs to the SPIN/STSY family. As to quaternary structure, interacts with C11orf84/SPINDOC. Associates with chromatin.

Its subcellular location is the cytoplasm. It localises to the nucleus. Binds to acetylated and methylated histones, including H3K4me3 and H4K20me3, probably acting as a histone reader that recognizes chromatin marks to mediate downstream cellular effects. Promotes canonical WNT signaling, and is involved in the down-regulation of cell proliferation. The chain is Spindlin-4 (Spin4) from Mus musculus (Mouse).